We begin with the raw amino-acid sequence, 159 residues long: Ribosomal RNA large subunit methyltransferase H (159 aa).

S-adenosyl-L-methionine is bound by residues leucine 76, glycine 108, and 127 to 132; that span reads FSKMTF.

The protein belongs to the RNA methyltransferase RlmH family. Homodimer.

The protein resides in the cytoplasm. It catalyses the reaction pseudouridine(1915) in 23S rRNA + S-adenosyl-L-methionine = N(3)-methylpseudouridine(1915) in 23S rRNA + S-adenosyl-L-homocysteine + H(+). Functionally, specifically methylates the pseudouridine at position 1915 (m3Psi1915) in 23S rRNA. The polypeptide is Ribosomal RNA large subunit methyltransferase H (Bacillus velezensis (strain DSM 23117 / BGSC 10A6 / LMG 26770 / FZB42) (Bacillus amyloliquefaciens subsp. plantarum)).